We begin with the raw amino-acid sequence, 483 residues long: Peroxisomal biogenesis factor 3 (483 aa).

Residues 1–14 (MTGNRSLVQRHRKK) lie on the Peroxisomal side of the membrane. A helical transmembrane segment spans residues 15–35 (FVVSSVLFATLFATCAITVYF). Over 36 to 483 (SKRWLYKQHL…SACVYSNFGL (448 aa)) the chain is Cytoplasmic. 2 disordered regions span residues 119–149 (GLSS…VSET) and 230–253 (NNLP…TRSI). The segment covering 242 to 253 (SDGTIDTDTRSI) has biased composition (polar residues).

Belongs to the peroxin-3 family.

The protein localises to the peroxisome membrane. Involved in peroxisome biosynthesis. This Kluyveromyces lactis (strain ATCC 8585 / CBS 2359 / DSM 70799 / NBRC 1267 / NRRL Y-1140 / WM37) (Yeast) protein is Peroxisomal biogenesis factor 3 (PEX3).